The following is a 487-amino-acid chain: 7-deoxyloganetin glucosyltransferase (487 aa).

Residue His-25 is the Proton acceptor of the active site. His-25 lines the an anthocyanidin pocket. Asp-129 serves as the catalytic Charge relay. UDP-alpha-D-glucose contacts are provided by Thr-151, Gln-366, His-381, Trp-384, Asn-385, Ser-386, and Glu-389. Ala-404 is an an anthocyanidin binding site. 2 residues coordinate UDP-alpha-D-glucose: Glu-405 and Gln-406.

The protein belongs to the UDP-glycosyltransferase family. As to expression, expressed in roots.

The enzyme catalyses 7-deoxyloganetin + UDP-alpha-D-glucose = 7-deoxyloganin + UDP + H(+). Its function is as follows. Iridoid glucosyltransferase acting exclusively on 7-deoxyloganetin. No activity with 7-deoxyloganetic acid. The protein is 7-deoxyloganetin glucosyltransferase (UGT85A23) of Catharanthus roseus (Madagascar periwinkle).